A 305-amino-acid polypeptide reads, in one-letter code: MTTTTSVLHTSALTSLPLLARGKVRDNYAVGNDRLLMVASDRLSAFDVILGEPIPGKGALLTQMALFWFDKLGSICPNHLTGEAPESVVTAAEIPQVAGRSMLVKRLKPIPVEAVVRGYLAGSGWVEYQQSQSVCGVPLPAGLKNASKLPEPIFTPAAKAEVGEHDENISYEQVVKVVGPELAAQIKTLSIAIYETAAAFALTKGIIIADTKFEFGLDENGTLTLMDEVLTPDSSRYWPVEGYEAAFAAGQNPPSYDKQFVRDWLEAVRINGKPWDKTPPSPHLPPDVISKTAAKYQEAMARLTA.

It belongs to the SAICAR synthetase family.

The catalysed reaction is 5-amino-1-(5-phospho-D-ribosyl)imidazole-4-carboxylate + L-aspartate + ATP = (2S)-2-[5-amino-1-(5-phospho-beta-D-ribosyl)imidazole-4-carboxamido]succinate + ADP + phosphate + 2 H(+). The protein operates within purine metabolism; IMP biosynthesis via de novo pathway; 5-amino-1-(5-phospho-D-ribosyl)imidazole-4-carboxamide from 5-amino-1-(5-phospho-D-ribosyl)imidazole-4-carboxylate: step 1/2. This is Phosphoribosylaminoimidazole-succinocarboxamide synthase from Polaromonas naphthalenivorans (strain CJ2).